Reading from the N-terminus, the 349-residue chain is tRNA pseudouridine synthase D (349 aa).

Phe-27 lines the substrate pocket. Asp-80 acts as the Nucleophile in catalysis. Substrate is bound at residue Asn-129. A TRUD domain is found at 155–303 (GVPNYFGAQR…VEAARRAMLL (149 aa)). A substrate-binding site is contributed by Phe-329.

Belongs to the pseudouridine synthase TruD family.

It catalyses the reaction uridine(13) in tRNA = pseudouridine(13) in tRNA. Its function is as follows. Responsible for synthesis of pseudouridine from uracil-13 in transfer RNAs. The polypeptide is tRNA pseudouridine synthase D (Shigella boydii serotype 4 (strain Sb227)).